The following is a 267-amino-acid chain: 4-hydroxy-tetrahydrodipicolinate reductase (267 aa).

NAD(+) contacts are provided by residues 8 to 13 and aspartate 34; that span reads GAAGRM. Arginine 35 is a binding site for NADP(+). Residues 98-100 and 122-125 each bind NAD(+); these read GTT and AANF. The Proton donor/acceptor role is filled by histidine 155. Histidine 156 is a (S)-2,3,4,5-tetrahydrodipicolinate binding site. Residue lysine 159 is the Proton donor of the active site. 165 to 166 serves as a coordination point for (S)-2,3,4,5-tetrahydrodipicolinate; the sequence is GT.

This sequence belongs to the DapB family.

The protein resides in the cytoplasm. It carries out the reaction (S)-2,3,4,5-tetrahydrodipicolinate + NAD(+) + H2O = (2S,4S)-4-hydroxy-2,3,4,5-tetrahydrodipicolinate + NADH + H(+). The catalysed reaction is (S)-2,3,4,5-tetrahydrodipicolinate + NADP(+) + H2O = (2S,4S)-4-hydroxy-2,3,4,5-tetrahydrodipicolinate + NADPH + H(+). It participates in amino-acid biosynthesis; L-lysine biosynthesis via DAP pathway; (S)-tetrahydrodipicolinate from L-aspartate: step 4/4. Its function is as follows. Catalyzes the conversion of 4-hydroxy-tetrahydrodipicolinate (HTPA) to tetrahydrodipicolinate. This Pseudomonas putida (strain ATCC 700007 / DSM 6899 / JCM 31910 / BCRC 17059 / LMG 24140 / F1) protein is 4-hydroxy-tetrahydrodipicolinate reductase.